The primary structure comprises 523 residues: Cytoplasmic dynein 1 light intermediate chain 1 (523 aa).

Residues Met1–Pro25 form a disordered region. Gly74–Thr81 is an ATP binding site. Disordered regions lie at residues Pro200–Arg219, Pro387–Met434, and Gly457–Ser523. The residue at position 207 (Ser207) is a Phosphoserine. Thr213 carries the post-translational modification Phosphothreonine. Phosphoserine occurs at positions 398 and 405. Thr408 is modified (phosphothreonine). Phosphoserine is present on residues Ser412, Ser419, Ser421, and Ser427. Residues Ser412–Ser421 are compositionally biased toward low complexity. A compositionally biased stretch (gly residues) spans Ser458–Ala473. Residues Gly474–Lys485 show a composition bias toward low complexity. Residues Ser486 and Ser510 each carry the phosphoserine modification. The segment covering Pro506–Ser523 has biased composition (low complexity). Phosphothreonine occurs at positions 512, 513, and 515. Ser516 carries the post-translational modification Phosphoserine.

It belongs to the dynein light intermediate chain family. Homodimer. The cytoplasmic dynein 1 complex consists of two catalytic heavy chains (HCs) and a number of non-catalytic subunits presented by intermediate chains (ICs), light intermediate chains (LICs) and light chains (LCs); the composition seems to vary in respect to the IC, LIC and LC composition. The heavy chain homodimer serves as a scaffold for the probable homodimeric assembly of the respective non-catalytic subunits. The ICs and LICs bind directly to the HC dimer and the LCs assemble on the IC dimer. Self-associates. Interacts with DYNC1H1; DYNC1LI1 and DYNC1LI2 bind mutually exclusive to DYNC1H1. Interacts with PCNT. Forms a complex with RAB11FIP3 and RAB11A1; the interaction between DYNC1LI1 and RAB11FIP3 is direct and induces DYNC1LI1 localization onto endosomal membrane; the complex regulates endocytic trafficking. Interacts with RUFY3. Phosphorylated during mitosis but not in interphase.

It localises to the cytoplasm. The protein resides in the chromosome. Its subcellular location is the centromere. The protein localises to the kinetochore. It is found in the cytoskeleton. It localises to the spindle pole. The protein resides in the recycling endosome membrane. Acts as one of several non-catalytic accessory components of the cytoplasmic dynein 1 complex that are thought to be involved in linking dynein to cargos and to adapter proteins that regulate dynein function. Cytoplasmic dynein 1 acts as a motor for the intracellular retrograde motility of vesicles and organelles along microtubules. May play a role in binding dynein to membranous organelles or chromosomes. Probably involved in the microtubule-dependent transport of pericentrin. Is required for progress through the spindle assembly checkpoint. The phosphorylated form appears to be involved in the selective removal of MAD1L1 and MAD1L2 but not BUB1B from kinetochores. Forms a functional Rab11/RAB11FIP3/dynein complex onto endosomal membrane that regulates the movement of peripheral sorting endosomes (SE) along microtubule tracks toward the microtubule organizing center/centrosome, generating the endosomal recycling compartment (ERC). The protein is Cytoplasmic dynein 1 light intermediate chain 1 (Dync1li1) of Mus musculus (Mouse).